Consider the following 392-residue polypeptide: MSREPTPPLPGDMSTGPIAESWCYTQVKVVKFSYMWTINNFSFCREEMGEVLKSSTFSSGPSDKMKWCLRVNPKGLDDESKDYLSLYLLLVSCPKSEVRAKFKFSLLNAKREETKAMESQRAYRFVQGKDWGFKKFIRRDFLLDEANGLLPDDKLTLFCEVSVVQDSVNISGHTNTNTLKVPECRLAEDLGNLWENTRFTDCSFFVRGQEFKAHKSVLAARSPVFNAMFEHEMEESKKNRVEINDLDPEVFKEMMRFIYTGRAPNLDKMADNLLAAADKYALERLKVMCEEALCSNLSVENVADTLVLADLHSAEQLKAQAIDFINRCSVLRQLGCKDGKNWNSNQATDIMETSGWKSMIQSHPHLVAEAFRALASAQCPQFGIPRKRLKQS.

Residues 31–161 (KFSYMWTINN…DDKLTLFCEV (131 aa)) form the MATH domain. The region spanning 200 to 267 (TDCSFFVRGQ…IYTGRAPNLD (68 aa)) is the BTB domain.

It belongs to the Tdpoz family. As to quaternary structure, homodimer. Heterodimer with SPOP. Component of cullin-RING-based BCR (BTB-CUL3-RBX1) E3 ubiquitin-protein ligase complexes containing homodimeric SPOPL or the heterodimer formed by SPOP and SPOPL. Interacts with CUL3 and MACROH2A1.

The protein localises to the nucleus. The protein operates within protein modification; protein ubiquitination. Its function is as follows. Component of a cullin-RING-based BCR (BTB-CUL3-RBX1) E3 ubiquitin-protein ligase complex that mediates the ubiquitination and subsequent proteasomal degradation of target proteins, but with relatively low efficiency. Cullin-RING-based BCR (BTB-CUL3-RBX1) E3 ubiquitin-protein ligase complexes containing homodimeric SPOPL or the heterodimer formed by SPOP and SPOPL are less efficient than ubiquitin ligase complexes containing only SPOP. May function to down-regulate the activity of cullin-RING-based BCR (BTB-CUL3-RBX1) E3 ubiquitin-protein ligase complexes that contain SPOP. The polypeptide is Speckle-type POZ protein-like (SPOPL) (Homo sapiens (Human)).